The primary structure comprises 312 residues: Ribonuclease Z (312 aa).

Zn(2+) is bound by residues His-62, His-64, Asp-66, His-67, His-139, Asp-210, and His-268. Asp-66 (proton acceptor) is an active-site residue.

Belongs to the RNase Z family. In terms of assembly, homodimer. Requires Zn(2+) as cofactor.

The catalysed reaction is Endonucleolytic cleavage of RNA, removing extra 3' nucleotides from tRNA precursor, generating 3' termini of tRNAs. A 3'-hydroxy group is left at the tRNA terminus and a 5'-phosphoryl group is left at the trailer molecule.. Its function is as follows. Zinc phosphodiesterase, which displays some tRNA 3'-processing endonuclease activity. Probably involved in tRNA maturation, by removing a 3'-trailer from precursor tRNA. The protein is Ribonuclease Z of Crocosphaera subtropica (strain ATCC 51142 / BH68) (Cyanothece sp. (strain ATCC 51142)).